A 467-amino-acid polypeptide reads, in one-letter code: Glutamate--tRNA ligase (467 aa).

The 'HIGH' region motif lies at 9 to 19; it reads PSPTGYLHIGG. A 'KMSKS' region motif is present at residues 237–241; that stretch reads KLSKR. K240 is an ATP binding site.

The protein belongs to the class-I aminoacyl-tRNA synthetase family. Glutamate--tRNA ligase type 1 subfamily. As to quaternary structure, monomer.

It is found in the cytoplasm. It catalyses the reaction tRNA(Glu) + L-glutamate + ATP = L-glutamyl-tRNA(Glu) + AMP + diphosphate. Functionally, catalyzes the attachment of glutamate to tRNA(Glu) in a two-step reaction: glutamate is first activated by ATP to form Glu-AMP and then transferred to the acceptor end of tRNA(Glu). In Xylella fastidiosa (strain M12), this protein is Glutamate--tRNA ligase.